Here is a 1012-residue protein sequence, read N- to C-terminus: Roundabout homolog 4 (1012 aa).

The signal sequence occupies residues 1 to 27 (MGSGGTGLLGTEWPLPLLLLFIMGGEA). Ig-like C2-type domains lie at 32-132 (PQIL…ARLS) and 138-225 (EDFQ…ARVS). Disulfide bonds link cysteine 53–cysteine 115 and cysteine 159–cysteine 208. Residues asparagine 201 and asparagine 247 are each glycosylated (N-linked (GlcNAc...) asparagine). 2 Fibronectin type-III domains span residues 249-346 (TLLN…LPEQ) and 348-443 (PSAP…LEQA). N-linked (GlcNAc...) asparagine glycosylation is found at asparagine 361, asparagine 390, and asparagine 397. Disordered regions lie at residues 533–553 (TSGSRDLSSSSSLSSRLGLDP) and 586–616 (LIAEQPSSPPVRPSPKTPAARRFPSKLAGTS). Over residues 534–550 (SGSRDLSSSSSLSSRLG) the composition is skewed to low complexity. A compositionally biased stretch (pro residues) spans 592–601 (SSPPVRPSPK). Residues asparagine 681 and asparagine 713 are each glycosylated (N-linked (GlcNAc...) asparagine). The interval 711 to 801 (HRNSSELASR…LEEEEDQDSV (91 aa)) is disordered. A compositionally biased stretch (low complexity) spans 745-759 (LQAPSSDPLPAAPLS). Polar residues predominate over residues 760-771 (VLNSSRPSSPQA). N-linked (GlcNAc...) asparagine glycans are attached at residues asparagine 762 and asparagine 783. The span at 772–791 (SFLSCPSPSSSNLSSSSLSS) shows a compositional bias: low complexity. Phosphoserine occurs at positions 814 and 947. Residues 980–1012 (RLGRGLPPWPPDSRASSQRSWLTGAVPKAGDSS) form a disordered region.

This sequence belongs to the immunoglobulin superfamily. ROBO family. As to quaternary structure, interacts with SLIT2 and ENAH. Expressed specifically in embryo and adult vascular endothelium.

Functionally, receptor for Slit proteins, at least for SLIT2, and seems to be involved in angiogenesis and vascular patterning. May mediate the inhibition of primary endothelial cell migration by Slit proteins. Involved in the maintenance of endothelial barrier organization and function. This chain is Roundabout homolog 4 (Robo4), found in Mus musculus (Mouse).